A 420-amino-acid chain; its full sequence is MINYSKPRGTIDLYNKEMNDFKLLENFLLSTTKRYGFQQIKTPVFEFAELFMKSAGESSDLVSKEMYLFKDKSDRWLALRPEGTAGVIRAVVENKLLLNHPLPLKLMYFEPCFRYERPQAGRQRQFHQFGVEVLGTKNIYYDFELIALADTILKKLMISNYILEINYISSPHNRSLWVKSLQEYFHLHRTELTPLSQERITTNPLRILDDKLESQKLVVKQAPKISHFLSNEEKEEFNLIKKMLDDYNIKYYVNEGLVRGLDYYSGLVFEFISTSPKLLGQSTIIGGGRYGELIKQTGGPNYEGIGFGIGIERLLIALSETNKNILNTDDDKYLIAFFDKELENEAIKLTQILRINNQLNVDIILSSTKADKIFKLAQRLNVKKLIILAKKEWSDKKIILKDLLNFKQDLLSLDEIKGIR.

This sequence belongs to the class-II aminoacyl-tRNA synthetase family. Homodimer.

It is found in the cytoplasm. It catalyses the reaction tRNA(His) + L-histidine + ATP = L-histidyl-tRNA(His) + AMP + diphosphate + H(+). This is Histidine--tRNA ligase from Ureaplasma parvum serovar 3 (strain ATCC 27815 / 27 / NCTC 11736).